Consider the following 398-residue polypeptide: Acetyl-CoA acetyltransferase (398 aa).

Serine 2 carries the N-acetylserine modification. Cysteine 91 (acyl-thioester intermediate) is an active-site residue. CoA is bound by residues tyrosine 186 and lysine 231. Tyrosine 186 provides a ligand contact to K(+). Alanine 248, alanine 249, and alanine 251 together coordinate K(+). Residue serine 252 coordinates CoA. Position 350 (valine 350) interacts with K(+). Active-site proton acceptor residues include histidine 354 and cysteine 384.

The protein belongs to the thiolase-like superfamily. Thiolase family. As to quaternary structure, homotetramer.

It localises to the cytoplasm. It carries out the reaction 2 acetyl-CoA = acetoacetyl-CoA + CoA. Its pathway is metabolic intermediate biosynthesis; (R)-mevalonate biosynthesis; (R)-mevalonate from acetyl-CoA: step 1/3. Functionally, acetyl-CoA acetyltransferase; part of the first module of ergosterol biosynthesis pathway that includes the early steps of the pathway, conserved across all eukaryotes, and which results in the formation of mevalonate from acetyl-coenzyme A (acetyl-CoA). In this module, the acetyl-CoA acetyltransferase ERG10 catalyzes the formation of acetoacetyl-CoA. The hydroxymethylglutaryl-CoA synthase ERG13 then condenses acetyl-CoA with acetoacetyl-CoA to form HMG-CoA. The rate-limiting step of the early module is the reduction to mevalonate by the 3-hydroxy-3-methylglutaryl-coenzyme A (HMG-CoA) reductases HMG1 and HMG2 which are derived from a single ancestral HMGR gene by gene duplication. This chain is Acetyl-CoA acetyltransferase, found in Saccharomyces pastorianus (strain ATCC 76670 / Carlsberg bottom yeast no.2 / CBS 1503 / CLIB 180 / NBRC 10610 / NRRL Y-1525) (Saaz-type lager yeast).